The primary structure comprises 431 residues: Histidine--tRNA ligase (431 aa).

Belongs to the class-II aminoacyl-tRNA synthetase family.

The protein resides in the cytoplasm. The catalysed reaction is tRNA(His) + L-histidine + ATP = L-histidyl-tRNA(His) + AMP + diphosphate + H(+). This is Histidine--tRNA ligase (hisS) from Pyrococcus horikoshii (strain ATCC 700860 / DSM 12428 / JCM 9974 / NBRC 100139 / OT-3).